A 168-amino-acid polypeptide reads, in one-letter code: Signal peptidase complex catalytic subunit SEC11 (168 aa).

The Cytoplasmic segment spans residues 1–12 (MNLRLELTRFLN). A helical; Signal-anchor for type II membrane protein membrane pass occupies residues 13 to 30 (LCFALASAFMFWKGLSIV). Over 31 to 168 (TNSHSPIVVV…IALSALLSNE (138 aa)) the chain is Lumenal. Catalysis depends on charge relay system residues S44, H83, and D110. Residues 154 to 165 (GLMGLIALSALL) are C-terminal short (CTS) helix.

Belongs to the peptidase S26B family. In terms of assembly, component of the signal peptidase complex (SPC) composed of a catalytic subunit SEC11 and three accessory subunits SPC1, SPC2 and SPC3. The complex induces a local thinning of the ER membrane which is used to measure the length of the signal peptide (SP) h-region of protein substrates. This ensures the selectivity of the complex towards h-regions shorter than 18-20 amino acids. SPC associates with the translocon complex.

It localises to the endoplasmic reticulum membrane. It carries out the reaction Cleavage of hydrophobic, N-terminal signal or leader sequences from secreted and periplasmic proteins.. In terms of biological role, catalytic component of the signal peptidase complex (SPC) which catalyzes the cleavage of N-terminal signal sequences from nascent proteins as they are translocated into the lumen of the endoplasmic reticulum. Specifically cleaves N-terminal signal peptides that contain a hydrophobic alpha-helix (h-region) shorter than 18-20 amino acids. This is Signal peptidase complex catalytic subunit SEC11 (SEC11) from Lachancea thermotolerans (strain ATCC 56472 / CBS 6340 / NRRL Y-8284) (Yeast).